Consider the following 84-residue polypeptide: Defensin-like protein 116 (84 aa).

The signal sequence occupies residues 1-24 (MAITKNMLVVLLLTIIFVTSSVHC). Cystine bridges form between C40-C80, C46-C71, C55-C78, and C59-C79.

Belongs to the DEFL family.

It localises to the secreted. The polypeptide is Defensin-like protein 116 (Arabidopsis thaliana (Mouse-ear cress)).